We begin with the raw amino-acid sequence, 156 residues long: Endoribonuclease YbeY (156 aa).

The Zn(2+) site is built by His-105, His-109, and Asp-115.

The protein belongs to the endoribonuclease YbeY family. Zn(2+) serves as cofactor.

It is found in the cytoplasm. Its function is as follows. Single strand-specific metallo-endoribonuclease involved in late-stage 70S ribosome quality control and in maturation of the 3' terminus of the 16S rRNA. This is Endoribonuclease YbeY from Chlorobium chlorochromatii (strain CaD3).